Consider the following 102-residue polypeptide: Alpha-hemoglobin-stabilizing protein (102 aa).

It belongs to the AHSP family. As to quaternary structure, monomer. Forms a heterodimer with free alpha-hemoglobin. Does not bind beta-hemoglobin nor alpha(2)beta(2) hemoglobin A. In terms of tissue distribution, expressed in spleen, bone marrow, and blood, with highest levels in bone marrow.

Its subcellular location is the cytoplasm. Acts as a chaperone to prevent the harmful aggregation of alpha-hemoglobin during normal erythroid cell development. Specifically protects free alpha-hemoglobin from precipitation. The sequence is that of Alpha-hemoglobin-stabilizing protein (Ahsp) from Mus musculus (Mouse).